The primary structure comprises 274 residues: Large ribosomal subunit protein uL2 (274 aa).

The tract at residues valine 224–lysine 274 is disordered. Positions tyrosine 257–lysine 274 are enriched in basic residues.

This sequence belongs to the universal ribosomal protein uL2 family. Part of the 50S ribosomal subunit. Forms a bridge to the 30S subunit in the 70S ribosome.

In terms of biological role, one of the primary rRNA binding proteins. Required for association of the 30S and 50S subunits to form the 70S ribosome, for tRNA binding and peptide bond formation. It has been suggested to have peptidyltransferase activity; this is somewhat controversial. Makes several contacts with the 16S rRNA in the 70S ribosome. The polypeptide is Large ribosomal subunit protein uL2 (Francisella philomiragia subsp. philomiragia (strain ATCC 25017 / CCUG 19701 / FSC 153 / O#319-036)).